Here is a 117-residue protein sequence, read N- to C-terminus: Large ribosomal subunit protein bL19 (117 aa).

Belongs to the bacterial ribosomal protein bL19 family.

Its function is as follows. This protein is located at the 30S-50S ribosomal subunit interface and may play a role in the structure and function of the aminoacyl-tRNA binding site. This is Large ribosomal subunit protein bL19 from Desulfosudis oleivorans (strain DSM 6200 / JCM 39069 / Hxd3) (Desulfococcus oleovorans).